The sequence spans 507 residues: Glutamate--tRNA ligase (507 aa).

Positions 14 to 24 match the 'HIGH' region motif; that stretch reads PSPTGPLHIGG. Positions 262–266 match the 'KMSKS' region motif; the sequence is KLSKR. Lys-265 is an ATP binding site.

It belongs to the class-I aminoacyl-tRNA synthetase family. Glutamate--tRNA ligase type 1 subfamily. As to quaternary structure, monomer.

It is found in the cytoplasm. It carries out the reaction tRNA(Glu) + L-glutamate + ATP = L-glutamyl-tRNA(Glu) + AMP + diphosphate. In terms of biological role, catalyzes the attachment of glutamate to tRNA(Glu) in a two-step reaction: glutamate is first activated by ATP to form Glu-AMP and then transferred to the acceptor end of tRNA(Glu). In Porphyromonas gingivalis (strain ATCC 33277 / DSM 20709 / CIP 103683 / JCM 12257 / NCTC 11834 / 2561), this protein is Glutamate--tRNA ligase.